The following is a 360-amino-acid chain: tRNA N6-adenosine threonylcarbamoyltransferase (360 aa).

The Fe cation site is built by His115 and His119. Substrate-binding positions include 137–141 (LVSGG), Asp170, Gly183, and Asn283. Asp311 provides a ligand contact to Fe cation.

This sequence belongs to the KAE1 / TsaD family. The cofactor is Fe(2+).

The protein localises to the cytoplasm. It catalyses the reaction L-threonylcarbamoyladenylate + adenosine(37) in tRNA = N(6)-L-threonylcarbamoyladenosine(37) in tRNA + AMP + H(+). Required for the formation of a threonylcarbamoyl group on adenosine at position 37 (t(6)A37) in tRNAs that read codons beginning with adenine. Is involved in the transfer of the threonylcarbamoyl moiety of threonylcarbamoyl-AMP (TC-AMP) to the N6 group of A37, together with TsaE and TsaB. TsaD likely plays a direct catalytic role in this reaction. The chain is tRNA N6-adenosine threonylcarbamoyltransferase from Rhizobium meliloti (strain 1021) (Ensifer meliloti).